The primary structure comprises 295 residues: Glycine N-acyltransferase (295 aa).

Lysine 15, lysine 126, and lysine 140 each carry N6-acetyllysine; alternate. N6-succinyllysine; alternate occurs at positions 15, 126, and 140. The residue at position 158 (lysine 158) is an N6-acetyllysine. An N6-succinyllysine modification is found at lysine 168. An N6-acetyllysine; alternate modification is found at lysine 255. Position 255 is an N6-succinyllysine; alternate (lysine 255).

This sequence belongs to the glycine N-acyltransferase family. In terms of tissue distribution, detected in liver (at protein level).

Its subcellular location is the mitochondrion. It catalyses the reaction an acyl-CoA + glycine = an N-acylglycine + CoA + H(+). It carries out the reaction benzoyl-CoA + glycine = N-benzoylglycine + CoA + H(+). Its function is as follows. Mitochondrial acyltransferase which transfers an acyl group to the N-terminus of glycine and glutamine, although much less efficiently. Can conjugate a multitude of substrates to form a variety of N-acylglycines, thereby detoxify xenobiotics, such as benzoic acid or salicylic acid, and endogenous organic acids, such as isovaleric acid. The chain is Glycine N-acyltransferase (GLYAT) from Bos taurus (Bovine).